A 1342-amino-acid chain; its full sequence is DNA-directed RNA polymerase subunit beta (1342 aa).

This sequence belongs to the RNA polymerase beta chain family. As to quaternary structure, the RNAP catalytic core consists of 2 alpha, 1 beta, 1 beta' and 1 omega subunit. When a sigma factor is associated with the core the holoenzyme is formed, which can initiate transcription.

It catalyses the reaction RNA(n) + a ribonucleoside 5'-triphosphate = RNA(n+1) + diphosphate. Its function is as follows. DNA-dependent RNA polymerase catalyzes the transcription of DNA into RNA using the four ribonucleoside triphosphates as substrates. This chain is DNA-directed RNA polymerase subunit beta, found in Yersinia pestis bv. Antiqua (strain Angola).